Here is a 443-residue protein sequence, read N- to C-terminus: Chromosome partition protein MukF (443 aa).

The interval 209-237 (LDETSINLRELQDTLNAAGDKLQSQLLRI) is leucine-zipper.

It belongs to the MukF family. As to quaternary structure, interacts, and probably forms a ternary complex, with MukE and MukB via its C-terminal region. The complex formation is stimulated by calcium or magnesium. It is required for an interaction between MukE and MukB.

The protein localises to the cytoplasm. It localises to the nucleoid. In terms of biological role, involved in chromosome condensation, segregation and cell cycle progression. May participate in facilitating chromosome segregation by condensation DNA from both sides of a centrally located replisome during cell division. Not required for mini-F plasmid partitioning. Probably acts via its interaction with MukB and MukE. Overexpression results in anucleate cells. It has a calcium binding activity. The chain is Chromosome partition protein MukF from Haemophilus ducreyi (strain 35000HP / ATCC 700724).